We begin with the raw amino-acid sequence, 639 residues long: Sec1 family domain-containing protein 1 (639 aa).

Phosphoserine is present on residues Ser34, Ser300, and Ser525.

This sequence belongs to the STXBP/unc-18/SEC1 family. In terms of assembly, interacts with STX17. Interacts with STX5A. Interacts with the COG complex via COG4.

It is found in the cytoplasm. The protein localises to the endoplasmic reticulum membrane. Its subcellular location is the golgi apparatus. The protein resides in the golgi stack membrane. Functionally, plays a role in SNARE-pin assembly and Golgi-to-ER retrograde transport via its interaction with COG4. Involved in vesicular transport between the endoplasmic reticulum and the Golgi. The polypeptide is Sec1 family domain-containing protein 1 (Scfd1) (Mus musculus (Mouse)).